The chain runs to 459 residues: MSQSSASSIFTVSRLNQTVRELLEREMGQIWLTAEISNFSQPASGHWYFTLKDDRAQVRCAMFRNSNRRTTFRPQNGQQVLVRASITLYEPRGDYQLIAESMQPAGDGLLQQQFEQLKQQLAAEGLFDQSHKQPLPSPAKQVGVITSASGAALHDVLHVLQRRDPSLPVIIYPTSVQGVDAPLQIVRAIQLANLRAECDVLIVGRGGGSLEDLWSFNDERVARAIFNSHIPIVSAVGHETDVTIADFVADLRAPTPSAAAELVSRNQIELVRQIQGQQQRMEMAMDYYLAQRTQQFTRLEHRLQQQHPHLRLARQQTLLLKLQRRLEESAQTQIRLLSKRTERLQQRLQQVQPQGQIHRYNQRVQQQEYRLRQAVERQLNGYRQRFGIACSQLEAVSPLATLARGYSVTQTPAGALLKTTKQVQAGDKLTTRLQDGWVESEITQVTVAKKSRQKKVVTQ.

This sequence belongs to the XseA family. Heterooligomer composed of large and small subunits.

It is found in the cytoplasm. The enzyme catalyses Exonucleolytic cleavage in either 5'- to 3'- or 3'- to 5'-direction to yield nucleoside 5'-phosphates.. Bidirectionally degrades single-stranded DNA into large acid-insoluble oligonucleotides, which are then degraded further into small acid-soluble oligonucleotides. The protein is Exodeoxyribonuclease 7 large subunit of Yersinia pseudotuberculosis serotype O:3 (strain YPIII).